A 296-amino-acid polypeptide reads, in one-letter code: Large ribosomal subunit protein uL18B (296 aa).

A disordered region spans residues 251-296; that stretch reads PVHEKKPKKEVKKKRWNRAKLSLEQKKDRVAQKKASFLRAQEKADS. Residues 255–268 show a composition bias toward basic residues; sequence KKPKKEVKKKRWNR. A compositionally biased stretch (basic and acidic residues) spans 271 to 281; sequence LSLEQKKDRVA.

This sequence belongs to the universal ribosomal protein uL18 family. As to quaternary structure, component of the large ribosomal subunit (LSU). Part of a LSU subcomplex, the 5S RNP which is composed of the 5S RNA, RPL5 and RPL11.

The protein resides in the cytoplasm. The protein localises to the nucleus. It is found in the nucleolus. Its function is as follows. Component of the ribosome, a large ribonucleoprotein complex responsible for the synthesis of proteins in the cell. The small ribosomal subunit (SSU) binds messenger RNAs (mRNAs) and translates the encoded message by selecting cognate aminoacyl-transfer RNA (tRNA) molecules. The large subunit (LSU) contains the ribosomal catalytic site termed the peptidyl transferase center (PTC), which catalyzes the formation of peptide bonds, thereby polymerizing the amino acids delivered by tRNAs into a polypeptide chain. The nascent polypeptides leave the ribosome through a tunnel in the LSU and interact with protein factors that function in enzymatic processing, targeting, and the membrane insertion of nascent chains at the exit of the ribosomal tunnel. As part of the 5S RNP/5S ribonucleoprotein particle it is an essential component of the LSU, required for its formation and the maturation of rRNAs. It also couples ribosome biogenesis to p53/TP53 activation. As part of the 5S RNP it accumulates in the nucleoplasm and inhibits MDM2, when ribosome biogenesis is perturbed, mediating the stabilization and the activation of TP53. This is Large ribosomal subunit protein uL18B (rpl5-b) from Xenopus laevis (African clawed frog).